The following is a 368-amino-acid chain: Tetraacyldisaccharide 4'-kinase (368 aa).

An ATP-binding site is contributed by 66–73 (TVGGTGKT).

This sequence belongs to the LpxK family.

The catalysed reaction is a lipid A disaccharide + ATP = a lipid IVA + ADP + H(+). The protein operates within glycolipid biosynthesis; lipid IV(A) biosynthesis; lipid IV(A) from (3R)-3-hydroxytetradecanoyl-[acyl-carrier-protein] and UDP-N-acetyl-alpha-D-glucosamine: step 6/6. Transfers the gamma-phosphate of ATP to the 4'-position of a tetraacyldisaccharide 1-phosphate intermediate (termed DS-1-P) to form tetraacyldisaccharide 1,4'-bis-phosphate (lipid IVA). The polypeptide is Tetraacyldisaccharide 4'-kinase (Desulfatibacillum aliphaticivorans).